Reading from the N-terminus, the 355-residue chain is DNA-directed RNA polymerase subunit alpha (355 aa).

Residues 1-248 (MYYDDGIPVF…EQLQPFISSD (248 aa)) form an alpha N-terminal domain (alpha-NTD) region. The interval 267-355 (YDPILLRKVD…ELARQHTDED (89 aa)) is alpha C-terminal domain (alpha-CTD).

Belongs to the RNA polymerase alpha chain family. In terms of assembly, homodimer. The RNAP catalytic core consists of 2 alpha, 1 beta, 1 beta' and 1 omega subunit. When a sigma factor is associated with the core the holoenzyme is formed, which can initiate transcription.

It carries out the reaction RNA(n) + a ribonucleoside 5'-triphosphate = RNA(n+1) + diphosphate. Its function is as follows. DNA-dependent RNA polymerase catalyzes the transcription of DNA into RNA using the four ribonucleoside triphosphates as substrates. The polypeptide is DNA-directed RNA polymerase subunit alpha (Wolbachia sp. subsp. Brugia malayi (strain TRS)).